Consider the following 732-residue polypeptide: Sesterbrasiliatriene synthase PbSS (732 aa).

The segment at 1-342 (MDFLSGAFHY…SRYHRDDLIT (342 aa)) is terpene cyclase. The Mg(2+) site is built by aspartate 105 and aspartate 109. Substrate-binding positions include aspartate 105, aspartate 109, 193–196 (RLSE), 242–246 (FNKEF), and 334–335 (RY). A DDXXD 1 motif is present at residues 105–109 (DDVTD). Residues 238-246 (DYYSFNKEF) carry the NSE/DTE motif. A prenyltransferase region spans residues 343-732 (TAGDRAMIVG…ARILLLGLGL (390 aa)). Disordered regions lie at residues 371-390 (KSATSSNDISGRKRKSWSDS) and 398-420 (ACYTNGSSNRAKRNGTEAGHKAN). A compositionally biased stretch (basic and acidic residues) spans 411–420 (NGTEAGHKAN). Residues lysine 453, arginine 456, and histidine 485 each coordinate isopentenyl diphosphate. Residues aspartate 492 and aspartate 496 each contribute to the Mg(2+) site. The short motif at 492–496 (DDIED) is the DDXXD 2 element. Dimethylallyl diphosphate is bound at residue arginine 501. Arginine 502 is a binding site for isopentenyl diphosphate. Residues lysine 579, threonine 580, glutamine 615, asparagine 622, lysine 632, and lysine 642 each coordinate dimethylallyl diphosphate.

It in the N-terminal section; belongs to the terpene synthase family. The protein in the C-terminal section; belongs to the FPP/GGPP synthase family. Hexamer. Mg(2+) is required as a cofactor.

The enzyme catalyses isopentenyl diphosphate + (2E,6E)-farnesyl diphosphate = (2E,6E,10E)-geranylgeranyl diphosphate + diphosphate. It carries out the reaction isopentenyl diphosphate + (2E,6E,10E)-geranylgeranyl diphosphate = (2E,6E,10E,14E)-geranylfarnesyl diphosphate + diphosphate. The protein operates within secondary metabolite biosynthesis; terpenoid biosynthesis. Bifunctional sesterterpene synthase that possesses both prenyl transferase and terpene cyclase activity, converting isopentenyl diphosphate and dimethylallyl diphosphate into geranylfarnesyl diphosphate (GFPP) and further converting GFPP into sesterbrasiliatriene. The sequence is that of Sesterbrasiliatriene synthase PbSS (PbSS) from Penicillium brasilianum.